The following is a 124-amino-acid chain: UPF0231 protein Shewmr7_3366 (124 aa).

The protein belongs to the UPF0231 family.

In Shewanella sp. (strain MR-7), this protein is UPF0231 protein Shewmr7_3366.